The sequence spans 45 residues: EKGFGFISTENGQDVFAHFSAIQTNGFKTLEEGQKVAFDVEEGQR.

The CSD domain occupies 1-45 (EKGFGFISTENGQDVFAHFSAIQTNGFKTLEEGQKVAFDVEEGQR).

As to quaternary structure, homodimer.

The protein localises to the cytoplasm. The protein is Major cold shock protein (cspA) of Streptococcus pyogenes.